The following is a 683-amino-acid chain: Methionine--tRNA ligase (683 aa).

The short motif at 15–25 (PYANGPIHLGH) is the 'HIGH' region element. Residues Cys146, Cys149, Cys159, and Cys162 each coordinate Zn(2+). A 'KMSKS' region motif is present at residues 332–336 (KMSKS). Lys335 is a binding site for ATP. Residues 581 to 683 (DFFKVDLRVA…AGAKAGQRVK (103 aa)) enclose the tRNA-binding domain.

The protein belongs to the class-I aminoacyl-tRNA synthetase family. MetG type 1 subfamily. Homodimer. Requires Zn(2+) as cofactor.

Its subcellular location is the cytoplasm. The catalysed reaction is tRNA(Met) + L-methionine + ATP = L-methionyl-tRNA(Met) + AMP + diphosphate. Functionally, is required not only for elongation of protein synthesis but also for the initiation of all mRNA translation through initiator tRNA(fMet) aminoacylation. This is Methionine--tRNA ligase from Histophilus somni (strain 129Pt) (Haemophilus somnus).